Consider the following 396-residue polypeptide: Purple acid phosphatase 5 (396 aa).

The N-terminal stretch at 1-13 (MSLETFPPPAGYN) is a signal peptide. Asparagine 58 is a glycosylation site (N-linked (GlcNAc...) asparagine). Aspartate 125 is a binding site for Fe cation. Asparagine 133 is a glycosylation site (N-linked (GlcNAc...) asparagine). 2 residues coordinate Fe cation: aspartate 153 and tyrosine 156. Aspartate 153 is a Zn(2+) binding site. Zn(2+) is bound at residue asparagine 190. Asparagine 190 lines the substrate pocket. N-linked (GlcNAc...) asparagine glycosylation is present at asparagine 238. Residue histidine 250 participates in Zn(2+) binding. Histidine 260 serves as the catalytic Proton donor. Histidine 287 is a Zn(2+) binding site. 287–289 (HVH) provides a ligand contact to substrate. Residue histidine 289 participates in Fe cation binding. Residues asparagine 303 and asparagine 360 are each glycosylated (N-linked (GlcNAc...) asparagine).

Belongs to the metallophosphoesterase superfamily. Purple acid phosphatase family. In terms of assembly, homodimer. Requires Fe cation as cofactor. Zn(2+) serves as cofactor.

It localises to the secreted. The catalysed reaction is a phosphate monoester + H2O = an alcohol + phosphate. The protein is Purple acid phosphatase 5 (PAP5) of Arabidopsis thaliana (Mouse-ear cress).